The chain runs to 217 residues: MKFFVDTADVKEIRELNDLGLVDGVTTNPSLILKSGRDIIEVTKEICNIVKGPVSAEVAATEYEQMMKEAAVIAKIADNICIKLPVTLDGLKACKALSSDGHKVNMTLCFSANQALLAAKAGATFISPFIGRLDDTGINGMELIAEIRTIYDNYDYRTEILAASVRTVNHVKEAALIGADVVTAPPATLKALVKHPLTDKGLETFLADWAKTGQKIA.

The active-site Schiff-base intermediate with substrate is the Lys83.

Belongs to the transaldolase family. Type 3B subfamily.

Its subcellular location is the cytoplasm. The enzyme catalyses D-sedoheptulose 7-phosphate + D-glyceraldehyde 3-phosphate = D-erythrose 4-phosphate + beta-D-fructose 6-phosphate. It functions in the pathway carbohydrate degradation; pentose phosphate pathway; D-glyceraldehyde 3-phosphate and beta-D-fructose 6-phosphate from D-ribose 5-phosphate and D-xylulose 5-phosphate (non-oxidative stage): step 2/3. Its function is as follows. Transaldolase is important for the balance of metabolites in the pentose-phosphate pathway. The sequence is that of Probable transaldolase from Brucella anthropi (strain ATCC 49188 / DSM 6882 / CCUG 24695 / JCM 21032 / LMG 3331 / NBRC 15819 / NCTC 12168 / Alc 37) (Ochrobactrum anthropi).